The sequence spans 572 residues: MRTSQYLLSTLKETPADAEVISHQLMLRAGMIRKLASGLYTWLPTGLRVLKKVENIVREEMNNAGAIEVSMPVVQPADLWQESGRWEQYGPELLRFVDRGERPFVLGPTHEEVITDLVRNELSSYKQLPLNFFQIQTKFRDEVRPRFGVMRSREFLMKDAYSFHTSQESLQETYDAMYAAYSRIFSRMGLDFRAVQADTGSIGGNASHEFQVLAQSGEDDIVFSDVSDYAANIELAEAIAPQTPRAAATQEMTLVDTPNAKTIAELVEQFNLPIEKTVKTLLVKAAKDSKSTLVALLVRGDHELNEVKAEKLPHVASPLTFATEEEIRAVINAGPGSLGPVNMPIPVIIDRTVAAMSDFAAGANIDGKHYFGINWDRDVATPVVADIRNVVAGDPSPDGQGTLLIKRGIEVGHIFQLGTKYSEALKASVQGEDGRNQILTMGCYGIGVTRVVAAAIEQNFDERGIVWPDAIAPFQVAILPMNMHKSFRVQELAEKLYSELRAQGIEVLMDDRKERPGVMFADMELIGIPHTIVIGDRNLDNDDIEYKYRRSGKKSLIKTGDIVDYLVKAIKG.

Belongs to the class-II aminoacyl-tRNA synthetase family. ProS type 1 subfamily. As to quaternary structure, homodimer.

The protein resides in the cytoplasm. The catalysed reaction is tRNA(Pro) + L-proline + ATP = L-prolyl-tRNA(Pro) + AMP + diphosphate. Catalyzes the attachment of proline to tRNA(Pro) in a two-step reaction: proline is first activated by ATP to form Pro-AMP and then transferred to the acceptor end of tRNA(Pro). As ProRS can inadvertently accommodate and process non-cognate amino acids such as alanine and cysteine, to avoid such errors it has two additional distinct editing activities against alanine. One activity is designated as 'pretransfer' editing and involves the tRNA(Pro)-independent hydrolysis of activated Ala-AMP. The other activity is designated 'posttransfer' editing and involves deacylation of mischarged Ala-tRNA(Pro). The misacylated Cys-tRNA(Pro) is not edited by ProRS. The sequence is that of Proline--tRNA ligase from Salmonella choleraesuis (strain SC-B67).